The chain runs to 206 residues: UPF0301 protein Msil_1255 (206 aa).

The protein belongs to the UPF0301 (AlgH) family.

The sequence is that of UPF0301 protein Msil_1255 from Methylocella silvestris (strain DSM 15510 / CIP 108128 / LMG 27833 / NCIMB 13906 / BL2).